The following is a 1290-amino-acid chain: 1-phosphatidylinositol 4,5-bisphosphate phosphodiesterase gamma-1 (1290 aa).

Alanine 2 carries the post-translational modification N-acetylalanine. The PH 1 domain occupies 27 to 142 (RSLEVGTVMT…WIKGLTWLME (116 aa)). Residues 152-187 (QIERWLRKQFYSVDRNREDRISAKDLKNMLSQVNYR) enclose the EF-hand domain. Positions 165, 167, 169, 171, and 176 each coordinate Ca(2+). The 145-residue stretch at 320–464 (ETMNNPLSHY…LKRKILIKHK (145 aa)) folds into the PI-PLC X-box domain. Active-site residues include histidine 335 and histidine 380. One can recognise a PH 2; first part domain in the interval 489 to 523 (SIKNGILYLEDPVNHEWYPHYFVLTSSKIYYSEET). Position 506 is a phosphotyrosine (tyrosine 506). The interval 522-546 (ETSSDQGNEDEEEPKEASGSTELHS) is disordered. SH2 domains are found at residues 550–657 (WFHG…SEPV) and 668–756 (WYHA…RYPI). Phosphotyrosine; by SYK is present on tyrosine 771. At tyrosine 775 the chain carries Phosphotyrosine. Tyrosine 783 is modified (phosphotyrosine; by ITK, SYK and TXK). The SH3 domain occupies 791-851 (TFKCAVKALF…PSNYVEEMIN (61 aa)). The PH 2; second part domain occupies 895 to 931 (FVFSISMPSVAQWSLDVAADSQEELQDWVKKIREVAQ). The region spanning 953–1070 (LSELVVYCRP…GYVLQPSTMR (118 aa)) is the PI-PLC Y-box domain. The residue at position 977 (tyrosine 977) is a Phosphotyrosine. One can recognise a C2 domain in the interval 1071–1194 (DEAFDPFDKS…TGYRAVPLKN (124 aa)). Serine 1221, serine 1227, serine 1233, and serine 1248 each carry phosphoserine. Tyrosine 1253 carries the post-translational modification Phosphotyrosine. Serine 1263 bears the Phosphoserine mark. The tract at residues 1271-1290 (FDSRERRAPRRTRVNGDNRL) is disordered.

As to quaternary structure, interacts with AGAP2 via its SH3 domain. Interacts (via SH2 domain) with RET. Interacts with FLT1 (tyrosine-phosphorylated). Interacts (via SH2 domain) with FGFR1, FGFR2, FGFR3 and FGFR4 (phosphorylated). Interacts with LAT (phosphorylated) upon TCR activation. Interacts (via SH3 domain) with the Pro-rich domain of TNK1. Associates with BLNK, VAV1, GRB2 and NCK1 in a B-cell antigen receptor-dependent fashion. Interacts with CBLB in activated T-cells; which inhibits phosphorylation. Interacts with SHB. Interacts (via SH3 domain) with the Arg/Gly-rich-flanked Pro-rich domains of KHDRBS1/SAM68. This interaction is selectively regulated by arginine methylation of KHDRBS1/SAM68. Interacts with INPP5D/SHIP1, THEMIS and CLNK. Interacts with AXL, FLT4 and KIT. Interacts with RALGPS1. Interacts (via the SH2 domains) with VIL1 (phosphorylated at C-terminus tyrosine phosphorylation sites). Interacts (via SH2 domain) with PDGFRA and PDGFRB (tyrosine phosphorylated). Interacts with PIP5K1C. Interacts with NTRK1 and NTRK2 (phosphorylated upon ligand-binding). Interacts with SYK; activates PLCG1. Interacts with GRB2, LAT and THEMIS upon TCR activation in thymocytes. Interacts with TESPA1; the association is increased with prolonged stimulation of the TCR and may facilitate the assembly of the LAT signalosome. Interacts (via C-terminal proline-rich domain (PRD)) with PLCG1 (via SH3 domain); this interaction leads to guanine nucleotide exchange from PlCG1 to DNM1 and enhances DNM1-dependent endocytosis. Ca(2+) is required as a cofactor. In terms of processing, ubiquitinated by CBLB in activated T-cells. Tyrosine phosphorylated in response to signaling via activated FLT3, KIT and PDGFRA. Tyrosine phosphorylated by activated FGFR1, FGFR2, FGFR3 and FGFR4. Tyrosine phosphorylated by activated FLT1 and KDR. Tyrosine phosphorylated by activated PDGFRB. The receptor-mediated activation of PLCG1 involves its phosphorylation by tyrosine kinases, in response to ligation of a variety of growth factor receptors and immune system receptors. For instance, SYK phosphorylates and activates PLCG1 in response to ligation of the B-cell receptor. May be dephosphorylated by PTPRJ. Phosphorylated by ITK and TXK on Tyr-783 upon TCR activation in T-cells.

Its subcellular location is the cell projection. It localises to the lamellipodium. It is found in the ruffle. The enzyme catalyses a 1,2-diacyl-sn-glycero-3-phospho-(1D-myo-inositol-4,5-bisphosphate) + H2O = 1D-myo-inositol 1,4,5-trisphosphate + a 1,2-diacyl-sn-glycerol + H(+). It catalyses the reaction a 1,2-diacyl-sn-glycero-3-phospho-(1D-myo-inositol) + H2O = 1D-myo-inositol 1-phosphate + a 1,2-diacyl-sn-glycerol + H(+). Activated by phosphorylation on tyrosine residues. Functionally, mediates the production of the second messenger molecules diacylglycerol (DAG) and inositol 1,4,5-trisphosphate (IP3). Plays an important role in the regulation of intracellular signaling cascades. Becomes activated in response to ligand-mediated activation of receptor-type tyrosine kinases, such as PDGFRA, PDGFRB, EGFR, FGFR1, FGFR2, FGFR3 and FGFR4. Plays a role in actin reorganization and cell migration. Guanine nucleotide exchange factor that binds the GTPase DNM1 and catalyzes the dissociation of GDP, allowing a GTP molecule to bind in its place, therefore enhancing DNM1-dependent endocytosis. This is 1-phosphatidylinositol 4,5-bisphosphate phosphodiesterase gamma-1 from Rattus norvegicus (Rat).